The primary structure comprises 1171 residues: APC-related protein 1 (1171 aa).

Positions 1–54 (MSSSSSDENETTIHSSSNPGSSGIYSQLKAGSSKRPSVRHDVSDAEDDEEPYEG) are disordered. The segment at 1 to 481 (MSSSSSDENE…LSLRATRASP (481 aa)) is required for interaction with bar-1 and hmp-2. The span at 15–26 (SSSNPGSSGIYS) shows a compositional bias: low complexity. The ARM repeat unit spans residues 312–356 (NCLKVLANILSPDARFTTLVDSASGILKYVSQYLATNSSHLELRS). Disordered stretches follow at residues 587-617 (PVDD…NPGS), 662-699 (HPED…GTTV), 720-741 (RKTS…LEVE), 767-822 (EEMP…EMTT), 837-936 (PRSR…TMRI), and 995-1030 (SSGS…SSLP). Residues 591–1171 (DLDIPTSTVM…NPKQMLVTIV (581 aa)) are required for interaction with pry-1. Polar residues-rich tracts occupy residues 595 to 617 (PTST…NPGS) and 666 to 697 (NQMT…SDGT). Residues 788–799 (FSPSQKTTSSPA) show a composition bias toward polar residues. The segment covering 857–874 (EPDRSSHSKNEEADRRDA) has biased composition (basic and acidic residues). Polar residues-rich tracts occupy residues 890-913 (RGSS…SSED) and 1002-1028 (LQKA…SVSS).

Belongs to the adenomatous polyposis coli (APC) family. As to quaternary structure, interacts (via N-terminus) with bar-1 and hmp-2; the interaction with hmp-2 is relatively weak. Interacts (via C-terminus) with pry-1 (via N-terminus). Probably associates with bar-1, gsk-3, pry-1 in a complex.

Its subcellular location is the cell junction. The protein localises to the adherens junction. It localises to the cytoplasm. It is found in the nucleus. Has a role in endoderm cell specification and pharyngeal development. Required for the migration of epithelial cells, organization of the anterior seam cells and ceh-13 expression during embryo morphogenesis. Prevents hyperactivation of the Wnt signaling pathway during endoderm development, probably by preventing hmp-2 nuclear translocation. During larval development, apr-1 is required for expression of lin-39 in P3-8.p. Shown to negatively regulate Wnt signaling in vulval precursor cells. Has a role in cell division by establishing the polarity of the mother cell which forms the asymmetries of the daughter nuclei. Thought to regulate export of wrm-1 from the nucleus possibly as part of a complex involving pry-1. In Caenorhabditis briggsae, this protein is APC-related protein 1.